A 379-amino-acid chain; its full sequence is Inositol 3-kinase (379 aa).

ATP-binding positions include S217, 267–270 (GAGD), and N294. The active-site Proton acceptor is D270.

Belongs to the carbohydrate kinase pfkB family.

The catalysed reaction is myo-inositol + ATP = 1D-myo-inositol 3-phosphate + ADP + H(+). Its function is as follows. Kinase that phosphorylates myo-inositol to produce multiple myo-inositol monophosphates, Ins(1)P, Ins(3)P, Ins(4)P, Ins(5)P and Ins(6)P. Participates in phytic acid biosynthesis in developing seeds. Phytic acid is the primary storage form of phosphorus in cereal grains and other plant seeds. In Zea mays (Maize), this protein is Inositol 3-kinase.